A 135-amino-acid chain; its full sequence is Protein cornichon homolog 1 (135 aa).

The next 3 membrane-spanning stretches (helical) occupy residues 2–22 (VFVW…VIYQ), 51–71 (FVLQ…AMFL), and 111–131 (IVGL…TVLL).

The protein belongs to the cornichon family. In terms of assembly, interacts with HKT1;3.

It localises to the endoplasmic reticulum membrane. It is found in the golgi apparatus membrane. Functionally, acts as a cargo receptor necessary for the transportation of the cation transporter HKT1;3 and possibly other secretory proteins from the endoplasmic reticulum (ER) in COPII-coated vesicles targeted to the Golgi apparatus. The polypeptide is Protein cornichon homolog 1 (Oryza sativa subsp. japonica (Rice)).